The sequence spans 271 residues: MERYPRQRLDDGRWQCVARPQYRYSCAISCLVSIFNHLFNRDMTLDECIAILFPDLKEDPRHYDFGPQASNSAVQSWFKTLCMHYGLSGTSCTIYKEQGRTRTACSKQEALKNIISALNTPRCALLYHCLNHYCIIVGYIISPSTPNRPSNHCVFSGDDGCTLKLLCADGTEAEDVDDSNIWLIVADCGKGTAPLRSLTWEFVHKDISTRPPYAYNARCPERGLLRKTESKGYIPVEIDSVLVNSTGVSTCVRSGGVIKGSSHCIIGFVSD.

The protein belongs to the BIVM family.

This is Basic immunoglobulin-like variable motif-containing protein (BIVM) from Giardia intestinalis (strain ATCC 50803 / WB clone C6) (Giardia lamblia).